The chain runs to 194 residues: Peptidyl-tRNA hydrolase (194 aa).

Tyr-17 contributes to the tRNA binding site. His-22 (proton acceptor) is an active-site residue. TRNA is bound by residues Tyr-68, Asn-70, and Asn-116.

It belongs to the PTH family. In terms of assembly, monomer.

It localises to the cytoplasm. It carries out the reaction an N-acyl-L-alpha-aminoacyl-tRNA + H2O = an N-acyl-L-amino acid + a tRNA + H(+). In terms of biological role, hydrolyzes ribosome-free peptidyl-tRNAs (with 1 or more amino acids incorporated), which drop off the ribosome during protein synthesis, or as a result of ribosome stalling. Functionally, catalyzes the release of premature peptidyl moieties from peptidyl-tRNA molecules trapped in stalled 50S ribosomal subunits, and thus maintains levels of free tRNAs and 50S ribosomes. The protein is Peptidyl-tRNA hydrolase of Chromohalobacter salexigens (strain ATCC BAA-138 / DSM 3043 / CIP 106854 / NCIMB 13768 / 1H11).